The following is a 396-amino-acid chain: Apurinic-apyrimidinic endonuclease (396 aa).

Basic residues predominate over residues 31–41 (KGRGKIQKHIQ). Residues 31–100 (KGRGKIQKHI…TSGETIAQKK (70 aa)) form a disordered region. Positions 55 to 70 (NQSPGTTVEETLTEEN) are enriched in polar residues. Basic and acidic residues predominate over residues 72 to 85 (STDKEETSKLENKP). Residues His-185, His-225, Glu-261, Asp-295, His-298, His-332, Asp-345, His-347, and Glu-377 each contribute to the Zn(2+) site.

The protein belongs to the AP endonuclease 2 family. It depends on Zn(2+) as a cofactor.

It is found in the nucleus. This Caenorhabditis elegans protein is Apurinic-apyrimidinic endonuclease (apn-1).